A 324-amino-acid polypeptide reads, in one-letter code: Putative arsenical pump-driving ATPase (324 aa).

21–28 serves as a coordination point for ATP; the sequence is GKGGVGKT.

It belongs to the arsA ATPase family.

The catalysed reaction is arsenite(in) + ATP + H2O = arsenite(out) + ADP + phosphate + H(+). In terms of biological role, anion-transporting ATPase. Catalyzes the extrusion of arsenite. In Methanothermobacter thermautotrophicus (strain ATCC 29096 / DSM 1053 / JCM 10044 / NBRC 100330 / Delta H) (Methanobacterium thermoautotrophicum), this protein is Putative arsenical pump-driving ATPase.